The primary structure comprises 365 residues: Peptide chain release factor 2 (365 aa).

N5-methylglutamine is present on glutamine 252.

It belongs to the prokaryotic/mitochondrial release factor family. Post-translationally, methylated by PrmC. Methylation increases the termination efficiency of RF2.

The protein localises to the cytoplasm. In terms of biological role, peptide chain release factor 2 directs the termination of translation in response to the peptide chain termination codons UGA and UAA. The protein is Peptide chain release factor 2 of Yersinia pseudotuberculosis serotype O:1b (strain IP 31758).